Consider the following 510-residue polypeptide: NAD(P)H-quinone oxidoreductase subunit 2 B, chloroplastic (510 aa).

Transmembrane regions (helical) follow at residues 24–44 (LLLF…GLIL), 57–77 (IPWL…ALLF), 99–119 (IFQF…VEYI), 124–144 (MAIT…MFLC), 149–169 (LITI…LSGY), 183–203 (YLLM…WLYG), 227–247 (PGIS…LSPA), 295–315 (WHLL…LIAI), 323–343 (MLAY…IVGD), 354–374 (YMLF…SFGL), 392–412 (AFLA…PPLA), 418–438 (LHLF…IGLL), and 482–502 (LSMI…NPII).

Belongs to the complex I subunit 2 family. In terms of assembly, NDH is composed of at least 16 different subunits, 5 of which are encoded in the nucleus.

The protein resides in the plastid. Its subcellular location is the chloroplast thylakoid membrane. The catalysed reaction is a plastoquinone + NADH + (n+1) H(+)(in) = a plastoquinol + NAD(+) + n H(+)(out). It carries out the reaction a plastoquinone + NADPH + (n+1) H(+)(in) = a plastoquinol + NADP(+) + n H(+)(out). Its function is as follows. NDH shuttles electrons from NAD(P)H:plastoquinone, via FMN and iron-sulfur (Fe-S) centers, to quinones in the photosynthetic chain and possibly in a chloroplast respiratory chain. The immediate electron acceptor for the enzyme in this species is believed to be plastoquinone. Couples the redox reaction to proton translocation, and thus conserves the redox energy in a proton gradient. This Morus indica (Mulberry) protein is NAD(P)H-quinone oxidoreductase subunit 2 B, chloroplastic.